We begin with the raw amino-acid sequence, 150 residues long: Aspartate 1-decarboxylase 1 (150 aa).

Residue S24 is the Schiff-base intermediate with substrate; via pyruvic acid of the active site. S24 is subject to Pyruvic acid (Ser). T56 lines the substrate pocket. Residue Y57 is the Proton donor of the active site. Residue 72-74 coordinates substrate; it reads GAA.

Belongs to the PanD family. Heterooctamer of four alpha and four beta subunits. Pyruvate serves as cofactor. Post-translationally, is synthesized initially as an inactive proenzyme, which is activated by self-cleavage at a specific serine bond to produce a beta-subunit with a hydroxyl group at its C-terminus and an alpha-subunit with a pyruvoyl group at its N-terminus.

The protein localises to the cytoplasm. The enzyme catalyses L-aspartate + H(+) = beta-alanine + CO2. Its pathway is cofactor biosynthesis; (R)-pantothenate biosynthesis; beta-alanine from L-aspartate: step 1/1. Functionally, catalyzes the pyruvoyl-dependent decarboxylation of aspartate to produce beta-alanine. This Mesorhizobium japonicum (strain LMG 29417 / CECT 9101 / MAFF 303099) (Mesorhizobium loti (strain MAFF 303099)) protein is Aspartate 1-decarboxylase 1.